A 279-amino-acid polypeptide reads, in one-letter code: MNAWNTIYDQFNPIAFSLGSIEVHWYGLAYACAIVTAFYMALRMIQKDPKRFPIERKEFESYFLWAELGIVLGARIGYILIYEPNSSYYLTHFWQIFNPFDSHGNFVGIRGMSYHGGLVGFLIASYLYSRKDLKKLLIYLDLIAISLPLGYVFGRIGNFLNQELVGRIVPKDSHLGQIIGIMVDNQLRYPSQLIEAFLEGVIVFLMVMWAKKHTKTRGLLIVVYGLGYSLMRFIAEFYREPDSQMGVYFLNLSMGQILSLFMVIVSLGILLYATKNSKK.

A run of 7 helical transmembrane segments spans residues 14 to 34 (IAFS…ACAI), 62 to 82 (YFLW…ILIY), 106 to 126 (FVGI…IASY), 136 to 156 (LLIY…FGRI), 190 to 210 (PSQL…VMWA), 218 to 238 (GLLI…AEFY), and 252 to 272 (LSMG…ILLY). Arg-155 lines the a 1,2-diacyl-sn-glycero-3-phospho-(1'-sn-glycerol) pocket.

The protein belongs to the Lgt family.

The protein resides in the cell inner membrane. The catalysed reaction is L-cysteinyl-[prolipoprotein] + a 1,2-diacyl-sn-glycero-3-phospho-(1'-sn-glycerol) = an S-1,2-diacyl-sn-glyceryl-L-cysteinyl-[prolipoprotein] + sn-glycerol 1-phosphate + H(+). Its pathway is protein modification; lipoprotein biosynthesis (diacylglyceryl transfer). In terms of biological role, catalyzes the transfer of the diacylglyceryl group from phosphatidylglycerol to the sulfhydryl group of the N-terminal cysteine of a prolipoprotein, the first step in the formation of mature lipoproteins. The chain is Phosphatidylglycerol--prolipoprotein diacylglyceryl transferase from Helicobacter pylori (strain HPAG1).